The chain runs to 38 residues: Large ribosomal subunit protein bL36 (38 aa).

The protein belongs to the bacterial ribosomal protein bL36 family.

In Synechocystis sp. (strain ATCC 27184 / PCC 6803 / Kazusa), this protein is Large ribosomal subunit protein bL36.